Here is an 820-residue protein sequence, read N- to C-terminus: Serine/threonine-protein phosphatase 4 regulatory subunit 3-A (820 aa).

A WH1 domain is found at 1 to 100; the sequence is MSDTRRRVKV…DEIWEKICQV (100 aa). Positions 682–694 are enriched in acidic residues; that stretch reads ELWFNEDDEEEGE. Disordered regions lie at residues 682-712 and 750-820; these read ELWFNEDDEEEGEAVVPPVEKTKPEDDFPEG and AANG…RLGS. Residues 701 to 712 show a composition bias toward basic and acidic residues; the sequence is EKTKPEDDFPEG. Composition is skewed to polar residues over residues 750–761 and 768–790; these read AANGANSTNSKS and PATSNGSSSKNTSLTTTVASTKG. The span at 798–809 shows a compositional bias: acidic residues; it reads YPDDEDEEEEED.

Belongs to the SMEK family. Serine/threonine-protein phosphatase 4 (PP4) occurs in different assemblies of the catalytic and one or more regulatory subunits.

Functionally, regulatory subunit of serine/threonine-protein phosphatase 4 (PP4). The protein is Serine/threonine-protein phosphatase 4 regulatory subunit 3-A of Xenopus laevis (African clawed frog).